The chain runs to 580 residues: DNA mismatch repair protein MutL (580 aa).

It belongs to the DNA mismatch repair MutL/HexB family.

Functionally, this protein is involved in the repair of mismatches in DNA. It is required for dam-dependent methyl-directed DNA mismatch repair. May act as a 'molecular matchmaker', a protein that promotes the formation of a stable complex between two or more DNA-binding proteins in an ATP-dependent manner without itself being part of a final effector complex. The polypeptide is DNA mismatch repair protein MutL (Chlamydia felis (strain Fe/C-56) (Chlamydophila felis)).